A 295-amino-acid chain; its full sequence is Probable aspartoacylase (295 aa).

Residues His-13 and Glu-16 each coordinate Zn(2+). Substrate-binding positions include Arg-54 and 61–62; that span reads NR. His-100 is a Zn(2+) binding site. Positions 158 and 268 each coordinate substrate.

Belongs to the AspA/AstE family. Aspartoacylase subfamily. Zn(2+) serves as cofactor.

It catalyses the reaction an N-acyl-L-aspartate + H2O = a carboxylate + L-aspartate. The sequence is that of Probable aspartoacylase from Prochlorococcus marinus subsp. pastoris (strain CCMP1986 / NIES-2087 / MED4).